We begin with the raw amino-acid sequence, 643 residues long: Phosphomethylpyrimidine synthase (643 aa).

Substrate-binding positions include Asn248, Met277, Tyr306, His342, 362 to 364, 403 to 406, and Glu442; these read SRG and DGLR. His446 is a binding site for Zn(2+). Tyr469 contacts substrate. His510 is a binding site for Zn(2+). [4Fe-4S] cluster is bound by residues Cys590, Cys593, and Cys598.

The protein belongs to the ThiC family. Homodimer. The cofactor is [4Fe-4S] cluster.

The catalysed reaction is 5-amino-1-(5-phospho-beta-D-ribosyl)imidazole + S-adenosyl-L-methionine = 4-amino-2-methyl-5-(phosphooxymethyl)pyrimidine + CO + 5'-deoxyadenosine + formate + L-methionine + 3 H(+). Its pathway is cofactor biosynthesis; thiamine diphosphate biosynthesis. In terms of biological role, catalyzes the synthesis of the hydroxymethylpyrimidine phosphate (HMP-P) moiety of thiamine from aminoimidazole ribotide (AIR) in a radical S-adenosyl-L-methionine (SAM)-dependent reaction. This is Phosphomethylpyrimidine synthase from Burkholderia lata (strain ATCC 17760 / DSM 23089 / LMG 22485 / NCIMB 9086 / R18194 / 383).